Here is a 200-residue protein sequence, read N- to C-terminus: Proteasome subunit beta 2 (200 aa).

Positions 1–7 (MEEKKTG) are cleaved as a propeptide — removed in mature form; by autocatalysis. The active-site Nucleophile is threonine 8.

Belongs to the peptidase T1B family. In terms of assembly, the 20S proteasome core is composed of 14 alpha and 14 beta subunits that assemble into four stacked heptameric rings, resulting in a barrel-shaped structure. The two inner rings, each composed of seven catalytic beta subunits, are sandwiched by two outer rings, each composed of seven alpha subunits. The catalytic chamber with the active sites is on the inside of the barrel. Has a gated structure, the ends of the cylinder being occluded by the N-termini of the alpha-subunits. Is capped at one or both ends by the proteasome regulatory ATPase, PAN.

The protein localises to the cytoplasm. It carries out the reaction Cleavage of peptide bonds with very broad specificity.. The formation of the proteasomal ATPase PAN-20S proteasome complex, via the docking of the C-termini of PAN into the intersubunit pockets in the alpha-rings, triggers opening of the gate for substrate entry. Interconversion between the open-gate and close-gate conformations leads to a dynamic regulation of the 20S proteasome proteolysis activity. Functionally, component of the proteasome core, a large protease complex with broad specificity involved in protein degradation. This chain is Proteasome subunit beta 2, found in Thermococcus gammatolerans (strain DSM 15229 / JCM 11827 / EJ3).